The sequence spans 395 residues: Putative carbonic anhydrase 1 (395 aa).

The signal sequence occupies residues 1–24 (MKLQGAGCVVAAVLGALFIVNVES). The Alpha-carbonic anhydrase domain occupies 42-365 (ISYDVRSTIG…LNDRPVFLVR (324 aa)). Residues H139, H141, and H165 each contribute to the Zn(2+) site.

Belongs to the alpha-carbonic anhydrase family. Requires Zn(2+) as cofactor. Component of the acid-insoluble and acid-soluble organic matrix of calcified layers of the shell (at protein level).

It localises to the secreted. The enzyme catalyses hydrogencarbonate + H(+) = CO2 + H2O. Functionally, reversible hydration of carbon dioxide. This chain is Putative carbonic anhydrase 1, found in Lottia gigantea (Giant owl limpet).